Reading from the N-terminus, the 493-residue chain is MTDVRVRFCPSPTGTPHVGLVRTALFNWAYARHTGGKLVFRIEDTDAARDSEESYSAIIDSLRWLGMDWDEGVEKGGPHEPYRQSQRKDIYQDVLKQLIDAGEVYPAYSTAEEVEERHKAAGRDPKLGYDNFDRDLTEEQVAAFEAEGRKPVWRLRMPEQDWKWTDLVRGEVEFKSFTQPDFVVARSNGEPLYTLVNPVDDALMEVTHVLRGEDLLPSTPRQLALYEALKRIGVAKATPAFGHLPFVMGEGNKKLSKRDPQSSLFNHRDNGIIPEGMLNYLALLGWSLSADQDIFGVDELIANFDVADVLGNPARFDQKKLEAINADHIRLLEPKDFEARLRAYMTEYTEFPADYPAEKFAIAAELVQTRIKVLSEAWDLLKFLVTADEDLVFNEKAAKKNLKETAVEPLNAGIAALEAVEEWTTPNIEAALNKALIEDLGLKPRVAFGALRIGISGEAVSPPLFESMELLGKESTLVRLKVTREQTPFVVAE.

Positions 10 to 20 (PSPTGTPHVGL) match the 'HIGH' region motif. Residues 254–258 (KLSKR) carry the 'KMSKS' region motif. Lys-257 is a binding site for ATP.

Belongs to the class-I aminoacyl-tRNA synthetase family. Glutamate--tRNA ligase type 1 subfamily. In terms of assembly, monomer.

It localises to the cytoplasm. The enzyme catalyses tRNA(Glu) + L-glutamate + ATP = L-glutamyl-tRNA(Glu) + AMP + diphosphate. Functionally, catalyzes the attachment of glutamate to tRNA(Glu) in a two-step reaction: glutamate is first activated by ATP to form Glu-AMP and then transferred to the acceptor end of tRNA(Glu). The protein is Glutamate--tRNA ligase of Corynebacterium glutamicum (strain ATCC 13032 / DSM 20300 / JCM 1318 / BCRC 11384 / CCUG 27702 / LMG 3730 / NBRC 12168 / NCIMB 10025 / NRRL B-2784 / 534).